The sequence spans 293 residues: MKI67 FHA domain-interacting nucleolar phosphoprotein (293 aa).

Ala2 is subject to N-acetylalanine. Residue Lys38 forms a Glycyl lysine isopeptide (Lys-Gly) (interchain with G-Cter in SUMO2) linkage. The RRM domain maps to 45 to 123 (GVVYVRHLPN…RLLECHFMPP (79 aa)). Omega-N-methylarginine; by PRMT1 and PRMT8 is present on Arg114. A Glycyl lysine isopeptide (Lys-Gly) (interchain with G-Cter in SUMO2) cross-link involves residue Lys139. Phosphoserine is present on Ser145. Glycyl lysine isopeptide (Lys-Gly) (interchain with G-Cter in SUMO2) cross-links involve residues Lys179 and Lys192. Residues 197-207 (SKTNRQTSTKG) are compositionally biased toward polar residues. The tract at residues 197–239 (SKTNRQTSTKGQVLRKKKKKVSGTLDTPEKTVDSQGPTPVCTP) is disordered. Ser218 is modified (phosphoserine). Residue Thr223 is modified to Phosphothreonine. An interaction with MKI67 region spans residues 226–269 (KTVDSQGPTPVCTPTFLERRKSQVAELNDDDKDDEIVFKQPISC). Ser230 carries the post-translational modification Phosphoserine. Residues Thr234 and Thr238 each carry the phosphothreonine modification. Arg244 and Arg245 each carry omega-N-methylated arginine; by PRMT1 and PRMT8. A Phosphoserine modification is found at Ser247. Lys271 participates in a covalent cross-link: Glycyl lysine isopeptide (Lys-Gly) (interchain with G-Cter in SUMO1); alternate. A Glycyl lysine isopeptide (Lys-Gly) (interchain with G-Cter in SUMO2); alternate cross-link involves residue Lys271. The segment at 271-293 (KEEIQETQTPTHSRKKRRRSSNQ) is disordered. The residue at position 279 (Thr279) is a Phosphothreonine. The span at 282-293 (HSRKKRRRSSNQ) shows a compositional bias: basic residues. Omega-N-methylarginine; by PRMT1 and PRMT8 is present on Arg284.

In terms of assembly, binds to the FHA domain of MKI67; this interaction is enhanced in mitosis. Post-translationally, sequentially phosphorylated on Thr-238, Thr-234 and Ser-230. Thr-234 is phosphorylated only when Thr-238 is phosphorylated. Likewise, phosphorylation at Ser-230 requires that Thr-234 and Thr-238 are phosphorylated. Phosphorylation enhances MKI67 binding.

It is found in the nucleus. Its subcellular location is the nucleolus. The protein localises to the chromosome. This is MKI67 FHA domain-interacting nucleolar phosphoprotein (NIFK) from Homo sapiens (Human).